A 326-amino-acid polypeptide reads, in one-letter code: Virulence factor CaO19.6688 (326 aa).

Disordered stretches follow at residues 19–91 (FNSL…KLPS), 112–137 (EEDNQEQQLQDGEPLSAPTTNNGTTK), 161–184 (NTTITSSRSNPTNSTPTSNDPSFP), 222–245 (NVGQTPNNNNNNNHGVSETENDLL), and 276–326 (YEYG…PKIK). Composition is skewed to low complexity over residues 21 to 42 (SLKSSPSSTSSLSSISTSSSSS), 53 to 78 (NRNTSNSQNSSISTAPTTATAANTTP), and 117 to 137 (EQQLQDGEPLSAPTTNNGTTK).

Virulence factor involved in pathogen-host interaction. Modulates host pro-inflammatory cytokine interleukin-1 beta (IL1B) expression. The polypeptide is Virulence factor CaO19.6688 (Candida albicans (strain SC5314 / ATCC MYA-2876) (Yeast)).